Reading from the N-terminus, the 283-residue chain is Nicotine 6-hydroxylase medium subunit (283 aa).

The 176-residue stretch at 1–176 (MKLPAIRYAS…TDVWIPSRPN (176 aa)) folds into the FAD-binding PCMH-type domain. Residues 31-35 (AGGQS) and 110-114 (TLGGS) each bind FAD.

In terms of assembly, heterotrimer composed of a large subunit (NdhL), a medium subunit (NdhM) and a small subunit (NdhS). FAD serves as cofactor.

Its subcellular location is the cytoplasm. It carries out the reaction (R)-nicotine + A + H2O = (R)-6-hydroxynicotine + AH2. The enzyme catalyses (S)-nicotine + A + H2O = (S)-6-hydroxynicotine + AH2. It participates in alkaloid degradation; nicotine degradation; 6-hydroxypseudooxynicotine from nicotine (R-isomer route): step 1/2. The protein operates within alkaloid degradation; nicotine degradation; 6-hydroxypseudooxynicotine from nicotine (S-isomer route): step 1/2. With respect to regulation, nicotine dehydrogenase activity is inhibited by tungsten. In terms of biological role, component of the nicotine 6-hydroxylase, which is involved in the degradation of nicotine. Catalyzes the hydroxylation of the pyridine ring at C6 to form 6-hydroxynicotine. Can use both L-nicotine and D-nicotine. This Paenarthrobacter nicotinovorans (Arthrobacter nicotinovorans) protein is Nicotine 6-hydroxylase medium subunit.